The primary structure comprises 134 residues: Prefoldin subunit alpha (134 aa).

This sequence belongs to the prefoldin subunit alpha family. As to quaternary structure, heterohexamer of two alpha and four beta subunits.

The protein localises to the cytoplasm. Its function is as follows. Molecular chaperone capable of stabilizing a range of proteins. Seems to fulfill an ATP-independent, HSP70-like function in archaeal de novo protein folding. In Pyrobaculum calidifontis (strain DSM 21063 / JCM 11548 / VA1), this protein is Prefoldin subunit alpha.